Consider the following 300-residue polypeptide: Dihydroorotate dehydrogenase B (NAD(+)), catalytic subunit (300 aa).

FMN-binding positions include serine 20 and 44-45 (KG). Substrate-binding positions include lysine 44 and 68–72 (NSVGL). The FMN site is built by asparagine 98 and asparagine 124. Residue asparagine 124 coordinates substrate. Catalysis depends on cysteine 127, which acts as the Nucleophile. Residues lysine 162 and isoleucine 188 each coordinate FMN. 189 to 190 (NT) provides a ligand contact to substrate. FMN-binding positions include glycine 214, 240–241 (GG), and 262–263 (GT).

The protein belongs to the dihydroorotate dehydrogenase family. Type 1 subfamily. As to quaternary structure, heterotetramer of 2 PyrK and 2 PyrD type B subunits. It depends on FMN as a cofactor.

Its subcellular location is the cytoplasm. It carries out the reaction (S)-dihydroorotate + NAD(+) = orotate + NADH + H(+). The protein operates within pyrimidine metabolism; UMP biosynthesis via de novo pathway; orotate from (S)-dihydroorotate (NAD(+) route): step 1/1. Functionally, catalyzes the conversion of dihydroorotate to orotate with NAD(+) as electron acceptor. In Caldicellulosiruptor bescii (strain ATCC BAA-1888 / DSM 6725 / KCTC 15123 / Z-1320) (Anaerocellum thermophilum), this protein is Dihydroorotate dehydrogenase B (NAD(+)), catalytic subunit (pyrD).